The primary structure comprises 509 residues: Protein root UVB sensitive 5 (509 aa).

The interval 22 to 49 is disordered; that stretch reads CQPKRRRVEHLRCSAQPSSIREDDEDAD.

Belongs to the RUS1 family.

The protein is Protein root UVB sensitive 5 of Arabidopsis thaliana (Mouse-ear cress).